Consider the following 506-residue polypeptide: Maturase K (506 aa).

Belongs to the intron maturase 2 family. MatK subfamily.

It localises to the plastid. Its subcellular location is the chloroplast. Its function is as follows. Usually encoded in the trnK tRNA gene intron. Probably assists in splicing its own and other chloroplast group II introns. The sequence is that of Maturase K from Carica papaya (Papaya).